The chain runs to 225 residues: Ferric nitrobindin-like protein (225 aa).

A GXWXGXG motif is present at residues 78–84 (GVWRGTG).

This sequence belongs to the nitrobindin family.

In Corynebacterium diphtheriae (strain ATCC 700971 / NCTC 13129 / Biotype gravis), this protein is Ferric nitrobindin-like protein.